The chain runs to 172 residues: UPF0398 protein gbs0290 (172 aa).

This sequence belongs to the UPF0398 family.

This Streptococcus agalactiae serotype III (strain NEM316) protein is UPF0398 protein gbs0290.